Reading from the N-terminus, the 426-residue chain is Serine--tRNA ligase (426 aa).

Residue 233–235 (TSE) coordinates L-serine. Residue 264 to 266 (RSE) participates in ATP binding. Glu-287 serves as a coordination point for L-serine. Residue 351–354 (EISS) coordinates ATP. Ser-387 contacts L-serine.

The protein belongs to the class-II aminoacyl-tRNA synthetase family. Type-1 seryl-tRNA synthetase subfamily. In terms of assembly, homodimer. The tRNA molecule binds across the dimer.

The protein localises to the cytoplasm. It carries out the reaction tRNA(Ser) + L-serine + ATP = L-seryl-tRNA(Ser) + AMP + diphosphate + H(+). The catalysed reaction is tRNA(Sec) + L-serine + ATP = L-seryl-tRNA(Sec) + AMP + diphosphate + H(+). It functions in the pathway aminoacyl-tRNA biosynthesis; selenocysteinyl-tRNA(Sec) biosynthesis; L-seryl-tRNA(Sec) from L-serine and tRNA(Sec): step 1/1. Catalyzes the attachment of serine to tRNA(Ser). Is also able to aminoacylate tRNA(Sec) with serine, to form the misacylated tRNA L-seryl-tRNA(Sec), which will be further converted into selenocysteinyl-tRNA(Sec). This is Serine--tRNA ligase from Xylella fastidiosa (strain 9a5c).